The following is a 398-amino-acid chain: Elongation factor Tu (398 aa).

The tr-type G domain maps to K10–E207. The tract at residues G19–T26 is G1. G19–T26 lines the GTP pocket. T26 lines the Mg(2+) pocket. The segment at G63–N67 is G2. Residues D84–G87 are G3. GTP is bound by residues D84 to H88 and N139 to D142. The segment at N139–D142 is G4. The interval S177–L179 is G5.

It belongs to the TRAFAC class translation factor GTPase superfamily. Classic translation factor GTPase family. EF-Tu/EF-1A subfamily. As to quaternary structure, monomer.

It is found in the cytoplasm. The catalysed reaction is GTP + H2O = GDP + phosphate + H(+). Its function is as follows. GTP hydrolase that promotes the GTP-dependent binding of aminoacyl-tRNA to the A-site of ribosomes during protein biosynthesis. This Streptococcus equi subsp. zooepidemicus (strain MGCS10565) protein is Elongation factor Tu.